The following is a 266-amino-acid chain: Type 1 encapsulin shell protein (266 aa).

Belongs to the encapsulin family. Family 1 subfamily. As to quaternary structure, homomultimeric. This encapsulin nanocompartment is formed by 60 subunits, and encloses one Dyp homohexamer; partially assembled 58-subunit compartments with and without cargo are also purified. May assemble the shell from dimers. Monomers form pentamers, which assemble to form hollow shells with pores 5-8 Angstroms in diameter where 3 pentamers meet.

It localises to the encapsulin nanocompartment. Functionally, shell component of a type 1 encapsulin nanocompartment. Assembles into proteinaceous shells 23-24 nm in diameter with 2-2.5 nm thick walls. Endogenous cargo protein DyP (dye-decolorizing peroxidase) is targeted to the interior via its C-terminal extension; only 1 DyP hexamer is incorporated into each shell. Empty shells can be isolated in the absence of cargo. Cargo encapsulation probably precedes assembly of the nanocompartment; may assemble or disassemble via dimers, subcomplexes with a distinct preference for even numbers of subunits are detected. Nanocompartments are stable against mechanical forces; loaded nanocompartments are less stable than empty ones. Nanocompartments are stable between pH 5-10; they aggregate at pH 9-10 and start to disassemble at pH 11. They are stable in 1M NaCl, 1 M MgCl(2) and 1M CaCl(2), unstable in 20% DMSO (dimethylsulfoxide) and are stable in 20% but not 40% ethanol. The sequence is that of Type 1 encapsulin shell protein from Brevibacterium linens.